Consider the following 215-residue polypeptide: Large ribosomal subunit protein bL25 (215 aa).

2 stretches are compositionally biased toward polar residues: residues 1-19 (MAKS…NTGK) and 206-215 (ENKTAATESE). Disordered regions lie at residues 1–29 (MAKS…RRDG) and 190–215 (AKYA…TESE).

It belongs to the bacterial ribosomal protein bL25 family. CTC subfamily. Part of the 50S ribosomal subunit; part of the 5S rRNA/L5/L18/L25 subcomplex. Contacts the 5S rRNA. Binds to the 5S rRNA independently of L5 and L18.

Its function is as follows. This is one of the proteins that binds to the 5S RNA in the ribosome where it forms part of the central protuberance. This Mycobacterium leprae (strain TN) protein is Large ribosomal subunit protein bL25.